The sequence spans 409 residues: MAGNILLLILDYVFHAGSRTLRVCILSLLILLSGCANLSDLGGGHLTDLFSSEEDEVEIDEAEIVALQTLAPINPLWQVKLAESKTAVFLPVYDNGALYVADEDGRLVKLDPVTGREIWRVETKSQLSGGVGAGGGMILLGTYKGEVLAFDEAGNALWQSRVPGEVLSPPKTDSGIVVVRTGDSKLFGLNATDGKRIWSYQSVTPPLTVRSFVGVSITRGAVFAGFPGGKLIALDLLTGNVGWEETVSQPHGVTELERMTDISSLPIVDENQVCAVAYRGRAACFEISSGNQIWARDASSSMGMVIDNHHVYISEEHGIVAAYDKSSGTAVWKRGKLGSRKLSGLMIVRGNRLVVGDDQGFVTLINRQDGSLLARSPTDGGIILSRAEYLPDGFVVQTLKGGVFAFSLQ.

The signal sequence occupies residues 1 to 34 (MAGNILLLILDYVFHAGSRTLRVCILSLLILLSG). Residue cysteine 35 is the site of N-palmitoyl cysteine attachment. Cysteine 35 carries the S-diacylglycerol cysteine lipid modification.

It belongs to the BamB family. As to quaternary structure, part of the Bam complex.

The protein resides in the cell outer membrane. Its function is as follows. Part of the outer membrane protein assembly complex, which is involved in assembly and insertion of beta-barrel proteins into the outer membrane. In Nitrosomonas eutropha (strain DSM 101675 / C91 / Nm57), this protein is Outer membrane protein assembly factor BamB.